The primary structure comprises 345 residues: Anthranilate phosphoribosyltransferase (345 aa).

5-phospho-alpha-D-ribose 1-diphosphate is bound by residues Gly-84, 87–88 (GD), Thr-92, 94–97 (NVTT), 112–120 (KHGNRSVSS), and Ser-124. Residue Gly-84 participates in anthranilate binding. Thr-96 is a binding site for Mg(2+). An anthranilate-binding site is contributed by Asn-115. Residue Arg-170 coordinates anthranilate. Mg(2+)-binding residues include Asp-228 and Glu-229.

Belongs to the anthranilate phosphoribosyltransferase family. As to quaternary structure, homodimer. It depends on Mg(2+) as a cofactor.

It carries out the reaction N-(5-phospho-beta-D-ribosyl)anthranilate + diphosphate = 5-phospho-alpha-D-ribose 1-diphosphate + anthranilate. It functions in the pathway amino-acid biosynthesis; L-tryptophan biosynthesis; L-tryptophan from chorismate: step 2/5. Catalyzes the transfer of the phosphoribosyl group of 5-phosphorylribose-1-pyrophosphate (PRPP) to anthranilate to yield N-(5'-phosphoribosyl)-anthranilate (PRA). The sequence is that of Anthranilate phosphoribosyltransferase from Corynebacterium aurimucosum (strain ATCC 700975 / DSM 44827 / CIP 107346 / CN-1) (Corynebacterium nigricans).